Reading from the N-terminus, the 594-residue chain is DELLA protein 1 (594 aa).

Residues 1 to 36 are disordered; the sequence is MKREHQESFGGGVISNNNKTNTNHLNSSKNINFGEC. Residues 15–30 are compositionally biased toward low complexity; the sequence is SNNNKTNTNHLNSSKN. The short motif at 61 to 65 is the DELLA motif element; sequence DELLA. A GRAS domain is found at 207-587; sequence VDTQETGVRL…RSLIATSAWK (381 aa). The leucine repeat I (LRI) stretch occupies residues 214–268; sequence VRLVHTLMACAEAIQQKNLKLAEALVKHISLLASLQTGAMRKVASYFAQALARRI. The segment at 216–253 is required for possible homodimerization; it reads LVHTLMACAEAIQQKNLKLAEALVKHISLLASLQTGAM. Positions 221 to 225 match the LxCxE motif; degenerate motif; the sequence is MACAE. The tract at residues 285–350 is VHIID; that stretch reads HMHFYESSPY…GGPPTFRLTG (66 aa). A VHIID motif is present at residues 316 to 320; the sequence is VHVID. Residues 364–396 form a leucine repeat II (LRII) region; it reads QVGWKLAQLAQTIGVQFEFRGFVCNSIADLDPN. Residues 406 to 508 are PFYRE; it reads VAVNSVFELH…EIYLGKQICN (103 aa). The short motif at 414–418 is the LXXLL motif; degenerate element; that stretch reads LHTML. The tract at residues 511-587 is SAW; sequence AYEGVDRVER…RSLIATSAWK (77 aa).

This sequence belongs to the GRAS family. DELLA subfamily. May be a homodimer. Post-translationally, ubiquitinated. Upon GA application it is ubiquitinated, leading to its subsequent degradation. As to expression, strongly expressed in the vascular tissue and endodermis but barely in the inner cortical cells where arbuscule are formed during arbuscular mycorrhizal (AM) symbiosis.

It localises to the nucleus. Functionally, probable transcriptional regulator that acts as a repressor of the gibberellin (GA) signaling pathway. Probably acts by participating in large multiprotein complexes that repress transcription of GA-inducible genes. Upon GA application, it is degraded by the proteasome, allowing the GA signaling pathway. Together with DELLA2, required to enable arbuscule development during arbuscular mycorrhizal (AM) symbiosis with AM fungi (e.g. Glomus versiforme) via the regulation of RAM1 which, in turn, regulates various AM genes (e.g. NSP1, NSP2, PT4, LEC5, RAM2, EXO70I, STR and RAD1). In Medicago truncatula (Barrel medic), this protein is DELLA protein 1.